The primary structure comprises 258 residues: Deoxyribose-phosphate aldolase (258 aa).

Asp-101 acts as the Proton donor/acceptor in catalysis. Lys-166 acts as the Schiff-base intermediate with acetaldehyde in catalysis. Lys-200 (proton donor/acceptor) is an active-site residue.

It belongs to the DeoC/FbaB aldolase family. DeoC type 2 subfamily.

It is found in the cytoplasm. The enzyme catalyses 2-deoxy-D-ribose 5-phosphate = D-glyceraldehyde 3-phosphate + acetaldehyde. It functions in the pathway carbohydrate degradation; 2-deoxy-D-ribose 1-phosphate degradation; D-glyceraldehyde 3-phosphate and acetaldehyde from 2-deoxy-alpha-D-ribose 1-phosphate: step 2/2. In terms of biological role, catalyzes a reversible aldol reaction between acetaldehyde and D-glyceraldehyde 3-phosphate to generate 2-deoxy-D-ribose 5-phosphate. The polypeptide is Deoxyribose-phosphate aldolase (Actinobacillus pleuropneumoniae serotype 5b (strain L20)).